The sequence spans 352 residues: Ion-translocating oxidoreductase complex subunit D (352 aa).

5 helical membrane-spanning segments follow: residues 20–40 (IMLLVLLAAIPGIATQLWFFG), 42–62 (GTLVQIILAVISALSAEALVL), 68–88 (PIAAILKDNSALLTGLLLAVS), 89–109 (IPPLAPWWMVVLGTVFAVIIA), and 123–143 (PAMIGYVVLLISFPVQMTNWL). Position 187 is an FMN phosphoryl threonine (Thr-187). 5 consecutive transmembrane segments (helical) span residues 217 to 237 (GAGWQWVNLAWLAGGVWLLAI), 244 to 264 (IPVSFLVSLALCATLGWLFAP), 267 to 287 (LASPQIHMLSGATMLGAFFIL), 301 to 321 (LIFGALAGVLVWLIRSFGGYP), and 322 to 342 (DGVAFAVLLANITVPLIDYYT).

The protein belongs to the NqrB/RnfD family. As to quaternary structure, the complex is composed of six subunits: RsxA, RsxB, RsxC, RsxD, RsxE and RsxG. It depends on FMN as a cofactor.

It is found in the cell inner membrane. Its function is as follows. Part of a membrane-bound complex that couples electron transfer with translocation of ions across the membrane. Required to maintain the reduced state of SoxR. The polypeptide is Ion-translocating oxidoreductase complex subunit D (Escherichia fergusonii (strain ATCC 35469 / DSM 13698 / CCUG 18766 / IAM 14443 / JCM 21226 / LMG 7866 / NBRC 102419 / NCTC 12128 / CDC 0568-73)).